The primary structure comprises 365 residues: DNA polymerase IV (365 aa).

A UmuC domain is found at 14-198 (IIHIDMDAFF…LPIEKFHGVG (185 aa)). Residues Asp18 and Asp116 each contribute to the Mg(2+) site. The active site involves Glu117.

It belongs to the DNA polymerase type-Y family. In terms of assembly, monomer. Mg(2+) is required as a cofactor.

It is found in the cytoplasm. The enzyme catalyses DNA(n) + a 2'-deoxyribonucleoside 5'-triphosphate = DNA(n+1) + diphosphate. In terms of biological role, poorly processive, error-prone DNA polymerase involved in untargeted mutagenesis. Copies undamaged DNA at stalled replication forks, which arise in vivo from mismatched or misaligned primer ends. These misaligned primers can be extended by PolIV. Exhibits no 3'-5' exonuclease (proofreading) activity. May be involved in translesional synthesis, in conjunction with the beta clamp from PolIII. In Streptococcus pyogenes serotype M3 (strain ATCC BAA-595 / MGAS315), this protein is DNA polymerase IV.